Here is a 131-residue protein sequence, read N- to C-terminus: Leptin receptor gene-related protein (131 aa).

Helical transmembrane passes span 7–27 (LVGL…GCAL), 32–52 (VYWP…HFIA), 69–89 (LAYF…IILA), and 100–120 (GLVL…FLVF).

It belongs to the OB-RGRP/VPS55 family.

The protein resides in the golgi apparatus membrane. The protein localises to the endosome membrane. Functionally, involved in protein trafficking. May be involved in the down-regulation of membrane protein levels. The sequence is that of Leptin receptor gene-related protein (LEPROT) from Gallus gallus (Chicken).